We begin with the raw amino-acid sequence, 74 residues long: ATP synthase subunit 9, mitochondrial (74 aa).

2 helical membrane passes run 16–36 and 50–70; these read GLIGAGVGIGVVFGALILGVA and ILGFAFSEATGLFALMMAFLL.

This sequence belongs to the ATPase C chain family. F-type ATPases have 2 components, CF(1) - the catalytic core - and CF(0) - the membrane proton channel. CF(1) has five subunits: alpha(3), beta(3), gamma(1), delta(1), epsilon(1). CF(0) has three main subunits: a, b and c.

Its subcellular location is the mitochondrion membrane. Mitochondrial membrane ATP synthase (F(1)F(0) ATP synthase or Complex V) produces ATP from ADP in the presence of a proton gradient across the membrane which is generated by electron transport complexes of the respiratory chain. F-type ATPases consist of two structural domains, F(1) - containing the extramembraneous catalytic core and F(0) - containing the membrane proton channel, linked together by a central stalk and a peripheral stalk. During catalysis, ATP synthesis in the catalytic domain of F(1) is coupled via a rotary mechanism of the central stalk subunits to proton translocation. Part of the complex F(0) domain. A homomeric c-ring of probably 10 subunits is part of the complex rotary element. In Trichophyton rubrum (Athlete's foot fungus), this protein is ATP synthase subunit 9, mitochondrial (ATP9).